The chain runs to 226 residues: 3-dehydroquinate dehydratase (226 aa).

3-dehydroquinate-binding positions include serine 21, 42-44, and arginine 70; that span reads EVR. The Proton donor/acceptor role is filled by histidine 124. The active-site Schiff-base intermediate with substrate is lysine 149. Residues arginine 187, threonine 206, and glutamine 210 each coordinate 3-dehydroquinate.

Belongs to the type-I 3-dehydroquinase family. As to quaternary structure, homodimer.

It catalyses the reaction 3-dehydroquinate = 3-dehydroshikimate + H2O. Its pathway is metabolic intermediate biosynthesis; chorismate biosynthesis; chorismate from D-erythrose 4-phosphate and phosphoenolpyruvate: step 3/7. Involved in the third step of the chorismate pathway, which leads to the biosynthesis of aromatic amino acids. Catalyzes the cis-dehydration of 3-dehydroquinate (DHQ) and introduces the first double bond of the aromatic ring to yield 3-dehydroshikimate. In Methanothrix thermoacetophila (strain DSM 6194 / JCM 14653 / NBRC 101360 / PT) (Methanosaeta thermophila), this protein is 3-dehydroquinate dehydratase.